The sequence spans 323 residues: Methionyl-tRNA formyltransferase (323 aa).

Position 115 to 118 (115 to 118 (SLLP)) interacts with (6S)-5,6,7,8-tetrahydrofolate.

This sequence belongs to the Fmt family.

The enzyme catalyses L-methionyl-tRNA(fMet) + (6R)-10-formyltetrahydrofolate = N-formyl-L-methionyl-tRNA(fMet) + (6S)-5,6,7,8-tetrahydrofolate + H(+). Attaches a formyl group to the free amino group of methionyl-tRNA(fMet). The formyl group appears to play a dual role in the initiator identity of N-formylmethionyl-tRNA by promoting its recognition by IF2 and preventing the misappropriation of this tRNA by the elongation apparatus. The sequence is that of Methionyl-tRNA formyltransferase from Lactococcus lactis subsp. cremoris (strain SK11).